We begin with the raw amino-acid sequence, 181 residues long: Acireductone dioxygenase (181 aa).

Positions 97, 99, 103, and 141 each coordinate Fe(2+). Ni(2+)-binding residues include His-97, His-99, Glu-103, and His-141.

The protein belongs to the acireductone dioxygenase (ARD) family. Monomer. Fe(2+) serves as cofactor. Requires Ni(2+) as cofactor.

It carries out the reaction 1,2-dihydroxy-5-(methylsulfanyl)pent-1-en-3-one + O2 = 3-(methylsulfanyl)propanoate + CO + formate + 2 H(+). The enzyme catalyses 1,2-dihydroxy-5-(methylsulfanyl)pent-1-en-3-one + O2 = 4-methylsulfanyl-2-oxobutanoate + formate + 2 H(+). It participates in amino-acid biosynthesis; L-methionine biosynthesis via salvage pathway; L-methionine from S-methyl-5-thio-alpha-D-ribose 1-phosphate: step 5/6. Catalyzes 2 different reactions between oxygen and the acireductone 1,2-dihydroxy-3-keto-5-methylthiopentene (DHK-MTPene) depending upon the metal bound in the active site. Fe-containing acireductone dioxygenase (Fe-ARD) produces formate and 2-keto-4-methylthiobutyrate (KMTB), the alpha-ketoacid precursor of methionine in the methionine recycle pathway. Ni-containing acireductone dioxygenase (Ni-ARD) produces methylthiopropionate, carbon monoxide and formate, and does not lie on the methionine recycle pathway. In Pseudomonas syringae pv. tomato (strain ATCC BAA-871 / DC3000), this protein is Acireductone dioxygenase.